Here is a 272-residue protein sequence, read N- to C-terminus: 3-deoxy-manno-octulosonate cytidylyltransferase (272 aa).

The protein belongs to the KdsB family.

It is found in the cytoplasm. The enzyme catalyses 3-deoxy-alpha-D-manno-oct-2-ulosonate + CTP = CMP-3-deoxy-beta-D-manno-octulosonate + diphosphate. It participates in nucleotide-sugar biosynthesis; CMP-3-deoxy-D-manno-octulosonate biosynthesis; CMP-3-deoxy-D-manno-octulosonate from 3-deoxy-D-manno-octulosonate and CTP: step 1/1. The protein operates within bacterial outer membrane biogenesis; lipopolysaccharide biosynthesis. In terms of biological role, activates KDO (a required 8-carbon sugar) for incorporation into bacterial lipopolysaccharide in Gram-negative bacteria. This is 3-deoxy-manno-octulosonate cytidylyltransferase from Verminephrobacter eiseniae (strain EF01-2).